The following is a 205-amino-acid chain: 3-demethoxyubiquinol 3-hydroxylase (205 aa).

The Fe cation site is built by E54, E84, H87, E136, E168, and H171.

This sequence belongs to the COQ7 family. The cofactor is Fe cation.

It is found in the cell membrane. The enzyme catalyses a 5-methoxy-2-methyl-3-(all-trans-polyprenyl)benzene-1,4-diol + AH2 + O2 = a 3-demethylubiquinol + A + H2O. Its pathway is cofactor biosynthesis; ubiquinone biosynthesis. Its function is as follows. Catalyzes the hydroxylation of 2-nonaprenyl-3-methyl-6-methoxy-1,4-benzoquinol during ubiquinone biosynthesis. The polypeptide is 3-demethoxyubiquinol 3-hydroxylase (Acidovorax sp. (strain JS42)).